The sequence spans 144 residues: Large ribosomal subunit protein uL15 (144 aa).

The segment at 20–49 is disordered; that stretch reads GRGIGSGLGKTGGRGHKGQKSRSGGFHKVG. Positions 21 to 31 are enriched in gly residues; it reads RGIGSGLGKTG.

It belongs to the universal ribosomal protein uL15 family. As to quaternary structure, part of the 50S ribosomal subunit.

Binds to the 23S rRNA. This is Large ribosomal subunit protein uL15 from Neisseria gonorrhoeae (strain ATCC 700825 / FA 1090).